The primary structure comprises 341 residues: Ferrochelatase (341 aa).

His-210 and Glu-291 together coordinate Fe cation.

Belongs to the ferrochelatase family.

The protein localises to the cytoplasm. The catalysed reaction is heme b + 2 H(+) = protoporphyrin IX + Fe(2+). It participates in porphyrin-containing compound metabolism; protoheme biosynthesis; protoheme from protoporphyrin-IX: step 1/1. Catalyzes the ferrous insertion into protoporphyrin IX. The polypeptide is Ferrochelatase (Alcanivorax borkumensis (strain ATCC 700651 / DSM 11573 / NCIMB 13689 / SK2)).